The following is a 652-amino-acid chain: DNA ligase (652 aa).

NAD(+) contacts are provided by residues 29–33 (DSDYD), 78–79 (SL), and glutamate 107. Residue lysine 109 is the N6-AMP-lysine intermediate of the active site. NAD(+) contacts are provided by arginine 130, glutamate 164, lysine 278, and lysine 302. Positions 395, 398, 413, and 418 each coordinate Zn(2+). Positions 577-652 (NSDAALFGLT…IEDEDWLRKL (76 aa)) constitute a BRCT domain.

It belongs to the NAD-dependent DNA ligase family. LigA subfamily. Requires Mg(2+) as cofactor. The cofactor is Mn(2+).

It carries out the reaction NAD(+) + (deoxyribonucleotide)n-3'-hydroxyl + 5'-phospho-(deoxyribonucleotide)m = (deoxyribonucleotide)n+m + AMP + beta-nicotinamide D-nucleotide.. Its function is as follows. DNA ligase that catalyzes the formation of phosphodiester linkages between 5'-phosphoryl and 3'-hydroxyl groups in double-stranded DNA using NAD as a coenzyme and as the energy source for the reaction. It is essential for DNA replication and repair of damaged DNA. The protein is DNA ligase of Streptococcus pyogenes serotype M18 (strain MGAS8232).